We begin with the raw amino-acid sequence, 617 residues long: Regulatory solute carrier protein family 1 member 1 (617 aa).

A compositionally biased stretch (polar residues) spans 1–22; sequence MSSLPTSDGFNHPARSSGQSPD. Disordered stretches follow at residues 1 to 106, 155 to 181, and 217 to 237; these read MSSL…EITV, ENQN…VAQQ, and KGNG…IPSS. Composition is skewed to basic and acidic residues over residues 43–52 and 66–83; these read SDSDRIEPKA and SEKK…HASS. 2 stretches are compositionally biased toward polar residues: residues 89–103 and 155–165; these read TDQS…SSEE and ENQNLSQVSDP. The interval 410–412 is involved in post-transcriptional down-regulation of SLC5A1; that stretch reads QCP. The region spanning 571-611 is the UBA domain; sequence IFPATDIDRILRAGFTLQEALGALHRVGGNADLALLVLLAK.

Interacts with YRDC. In terms of tissue distribution, expressed in small intestine, kidney and brain.

It is found in the cell membrane. Its subcellular location is the nucleus. The protein localises to the golgi apparatus. It localises to the trans-Golgi network. In terms of biological role, mediates transcriptional and post-transcriptional regulation of SLC5A1. Inhibits a dynamin and PKC-dependent exocytotic pathway of SLC5A1. Also involved in transcriptional regulation of SLC22A2. Exhibits glucose-dependent, short-term inhibition of SLC5A1 and SLC22A2 by inhibiting the release of vesicles from the trans-Golgi network. The polypeptide is Regulatory solute carrier protein family 1 member 1 (RSC1A1) (Homo sapiens (Human)).